Here is a 265-residue protein sequence, read N- to C-terminus: Speedy protein E12 (265 aa).

Residues Met-1–Pro-80 are disordered. The segment covering Gln-13–Gln-23 has biased composition (low complexity). Residues Asp-66 to Pro-80 are compositionally biased toward acidic residues.

It belongs to the Speedy/Ringo family.

The polypeptide is Speedy protein E12 (Homo sapiens (Human)).